Reading from the N-terminus, the 428-residue chain is tRNA dimethylallyltransferase (428 aa).

Residue 21–28 participates in ATP binding; that stretch reads GTTGVGKS. Dimethylallyl diphosphate is bound at residue 23–28; that stretch reads TGVGKS. Interaction with substrate tRNA regions lie at residues 46 to 49 and 170 to 174; these read DSMQ and RRVQR. Positions 199–207 are core aggregation region; that stretch reads FDTLFLWLY. Residues 210–232 are interaction with isopentenylpyrophosphate transferase; that stretch reads PEPLFQRLDDRVDDMLERGALQE. Interaction with substrate tRNA stretches follow at residues 256–258 and 284–302; these read QVI and RMKT…WIKK. A Matrin-type zinc finger spans residues 373–409; the sequence is YTCNVCRNADGKNVVAIGEKYWKIHLGSRRHKSNLKR. The Zn(2+) site is built by cysteine 375, cysteine 378, histidine 397, and histidine 403.

This sequence belongs to the IPP transferase family.

The protein localises to the cytoplasm. It localises to the mitochondrion. It is found in the nucleus. The catalysed reaction is adenosine(37) in tRNA + dimethylallyl diphosphate = N(6)-dimethylallyladenosine(37) in tRNA + diphosphate. Catalyzes the transfer of a dimethylallyl group onto the adenine at position 37 in the anticodon loop on a specific subset of tRNAs both in the cytosol and the mitochondrion, leading to the formation of N6-(dimethylallyl)adenosine (i(6)A). This modification optimizes the codon:anticodon fit in the ribosome and promotes translational fidelity. Competes with the farnesyl pyrophosphate synthase ERG20 for the common substrate dimethylallyl diphosphate (DMAPP). This Saccharomyces cerevisiae (strain ATCC 204508 / S288c) (Baker's yeast) protein is tRNA dimethylallyltransferase (MOD5).